The following is a 233-amino-acid chain: Pre-mRNA-splicing factor syf-2 (233 aa).

Over residues 1–16 (MSDSEQTSSGTASSGS) the composition is skewed to polar residues. Disordered regions lie at residues 1–80 (MSDS…EDKG) and 95–119 (VTEKLEQKRKRKKNPDQGFASYEDM). A compositionally biased stretch (basic and acidic residues) spans 17–80 (KMKDFNQRFR…QDRKEAEDKG (64 aa)). The stretch at 18 to 77 (MKDFNQRFRDLHKMRQKARKENHAQVVEEDRRKKLPKNFEAKKERDQWQVKELQDRKEAE) forms a coiled coil.

This sequence belongs to the SYF2 family. As to quaternary structure, may be part of a spliceosome complex.

The protein localises to the nucleus. May be involved in pre-mRNA splicing. This is Pre-mRNA-splicing factor syf-2 from Caenorhabditis briggsae.